The chain runs to 132 residues: MDVTRLLLATLLVFLCFFTVYSHLPPEEKLRDDRSLRSNSSVNLLDFPSVSIVALNKKSKQISRKEAEKKRSSKKEASMKKVAQPRTPLSAPCVATRDSCKPPAPACCDPCASCQCRFFRSACSCRVLSLNC.

A signal peptide spans 1 to 22 (MDVTRLLLATLLVFLCFFTVYS). Asn-39 carries an N-linked (GlcNAc...) asparagine glycan. Positions 62-93 (ISRKEAEKKRSSKKEASMKKVAQPRTPLSAPC) are disordered. Residues 63 to 79 (SRKEAEKKRSSKKEASM) are compositionally biased toward basic and acidic residues. 5 disulfides stabilise this stretch: Cys-93–Cys-108, Cys-100–Cys-114, Cys-107–Cys-125, Cys-111–Cys-132, and Cys-116–Cys-123. Positions 93-132 (CVATRDSCKPPAPACCDPCASCQCRFFRSACSCRVLSLNC) constitute an Agouti domain.

It is found in the secreted. Its function is as follows. Involved in the regulation of melanogenesis. The binding of ASP to MC1R precludes alpha-MSH initiated signaling and thus blocks production of cAMP, leading to a down-regulation of eumelanogenesis (brown/black pigment) and thus increasing synthesis of pheomelanin (yellow/red pigment). This chain is Agouti-signaling protein (ASIP), found in Trachypithecus auratus (Javan langur).